The primary structure comprises 271 residues: 5-deoxy-glucuronate isomerase (271 aa).

Belongs to the isomerase IolB family.

It carries out the reaction 5-deoxy-D-glucuronate = 5-dehydro-2-deoxy-D-gluconate. It participates in polyol metabolism; myo-inositol degradation into acetyl-CoA; acetyl-CoA from myo-inositol: step 4/7. In terms of biological role, involved in the isomerization of 5-deoxy-glucuronate (5DG) to 5-dehydro-2-deoxy-D-gluconate (DKG or 2-deoxy-5-keto-D-gluconate). This Bacillus velezensis (strain DSM 23117 / BGSC 10A6 / LMG 26770 / FZB42) (Bacillus amyloliquefaciens subsp. plantarum) protein is 5-deoxy-glucuronate isomerase.